We begin with the raw amino-acid sequence, 515 residues long: Cytochrome P450 1A1 (515 aa).

Residue Phe225 coordinates substrate. Heme is bound at residue Cys459.

Belongs to the cytochrome P450 family. The cofactor is heme.

It localises to the endoplasmic reticulum membrane. The protein localises to the microsome membrane. The enzyme catalyses an organic molecule + reduced [NADPH--hemoprotein reductase] + O2 = an alcohol + oxidized [NADPH--hemoprotein reductase] + H2O + H(+). Cytochromes P450 are a group of heme-thiolate monooxygenases. They oxidize a variety of structurally unrelated compounds, including steroids, fatty acids, and xenobiotics. This is Cytochrome P450 1A1 (cyp1a1) from Microgadus tomcod (Atlantic tomcod).